Here is a 160-residue protein sequence, read N- to C-terminus: Major strawberry allergen Fra a 1.08 (160 aa).

Belongs to the BetVI family. In terms of processing, phosphorylated in vivo. Phosphorylation prevents its activity as ribonuclease. Highly expressed in roots. Expressed a low levels in ripe red fruits.

Its function is as follows. Possesses ribonuclease activity in vitro. The protein is Major strawberry allergen Fra a 1.08 of Fragaria ananassa (Strawberry).